We begin with the raw amino-acid sequence, 317 residues long: Porphobilinogen deaminase (317 aa).

Residue cysteine 242 is modified to S-(dipyrrolylmethanemethyl)cysteine.

It belongs to the HMBS family. In terms of assembly, monomer. Requires dipyrromethane as cofactor.

It carries out the reaction 4 porphobilinogen + H2O = hydroxymethylbilane + 4 NH4(+). Its pathway is porphyrin-containing compound metabolism; protoporphyrin-IX biosynthesis; coproporphyrinogen-III from 5-aminolevulinate: step 2/4. In terms of biological role, tetrapolymerization of the monopyrrole PBG into the hydroxymethylbilane pre-uroporphyrinogen in several discrete steps. The chain is Porphobilinogen deaminase from Colwellia psychrerythraea (strain 34H / ATCC BAA-681) (Vibrio psychroerythus).